The primary structure comprises 146 residues: Large ribosomal subunit protein uL24 (146 aa).

A disordered region spans residues 1–33; the sequence is MKYNPRVTSSRRRNRKPHFTASSSERRVXMSSP. The span at 9–18 shows a compositional bias: basic residues; sequence SSRRRNRKPH.

Belongs to the universal ribosomal protein uL24 family.

This Brassica campestris (Field mustard) protein is Large ribosomal subunit protein uL24 (RPL26).